The primary structure comprises 368 residues: Aspartate-semialdehyde dehydrogenase (368 aa).

NADP(+)-binding positions include 10–13 (RGMV), 37–38 (TS), and Gln-74. Arg-103 provides a ligand contact to phosphate. The active-site Acyl-thioester intermediate is the Cys-136. At Cys-136 the chain carries S-cysteinyl cysteine; in inhibited form. Residue Gln-163 participates in substrate binding. NADP(+)-binding positions include 166–167 (SG) and Pro-194. Glu-242 contributes to the substrate binding site. Lys-245 is a binding site for phosphate. Arg-268 contacts substrate. The active-site Proton acceptor is the His-275. Gln-351 contacts NADP(+).

Belongs to the aspartate-semialdehyde dehydrogenase family. Homodimer.

The enzyme catalyses L-aspartate 4-semialdehyde + phosphate + NADP(+) = 4-phospho-L-aspartate + NADPH + H(+). The protein operates within amino-acid biosynthesis; L-lysine biosynthesis via DAP pathway; (S)-tetrahydrodipicolinate from L-aspartate: step 2/4. Its pathway is amino-acid biosynthesis; L-methionine biosynthesis via de novo pathway; L-homoserine from L-aspartate: step 2/3. It participates in amino-acid biosynthesis; L-threonine biosynthesis; L-threonine from L-aspartate: step 2/5. Catalyzes the NADPH-dependent formation of L-aspartate-semialdehyde (L-ASA) by the reductive dephosphorylation of L-aspartyl-4-phosphate. This chain is Aspartate-semialdehyde dehydrogenase, found in Salmonella typhi.